The following is a 283-amino-acid chain: Pantothenate synthetase (283 aa).

26–33 (MGNLHEGH) is a binding site for ATP. His-33 acts as the Proton donor in catalysis. Gln-57 is a (R)-pantoate binding site. Residue Gln-57 coordinates beta-alanine. Residue 144–147 (GKKD) participates in ATP binding. Gln-150 is a (R)-pantoate binding site. Residues Val-173 and 181 to 184 (LSSR) each bind ATP.

It belongs to the pantothenate synthetase family. Homodimer.

Its subcellular location is the cytoplasm. It catalyses the reaction (R)-pantoate + beta-alanine + ATP = (R)-pantothenate + AMP + diphosphate + H(+). Its pathway is cofactor biosynthesis; (R)-pantothenate biosynthesis; (R)-pantothenate from (R)-pantoate and beta-alanine: step 1/1. Catalyzes the condensation of pantoate with beta-alanine in an ATP-dependent reaction via a pantoyl-adenylate intermediate. The sequence is that of Pantothenate synthetase from Ralstonia pickettii (strain 12J).